A 212-amino-acid polypeptide reads, in one-letter code: Protein-L-isoaspartate O-methyltransferase (212 aa).

Residue S60 is part of the active site.

It belongs to the methyltransferase superfamily. L-isoaspartyl/D-aspartyl protein methyltransferase family.

It localises to the cytoplasm. The enzyme catalyses [protein]-L-isoaspartate + S-adenosyl-L-methionine = [protein]-L-isoaspartate alpha-methyl ester + S-adenosyl-L-homocysteine. Its function is as follows. Catalyzes the methyl esterification of L-isoaspartyl residues in peptides and proteins that result from spontaneous decomposition of normal L-aspartyl and L-asparaginyl residues. It plays a role in the repair and/or degradation of damaged proteins. This is Protein-L-isoaspartate O-methyltransferase from Methylorubrum populi (strain ATCC BAA-705 / NCIMB 13946 / BJ001) (Methylobacterium populi).